A 116-amino-acid polypeptide reads, in one-letter code: Ig heavy chain V region 441 (116 aa).

A signal peptide spans 1-18 (MDFGLIFFIVALLKGVQC). The Ig-like domain maps to 19–116 (EVKLLESGGG…EDTALYYCAR (98 aa)).

This is Ig heavy chain V region 441 from Mus musculus (Mouse).